The chain runs to 487 residues: Sodium-coupled neutral amino acid symporter 1 (487 aa).

The Cytoplasmic portion of the chain corresponds to 1-74 (MMHFKSGLEL…EYIPGTTSLG (74 aa)). At serine 6 the chain carries Phosphoserine. Threonine 11 is subject to Phosphothreonine. 4 positions are modified to phosphoserine: serine 25, serine 28, serine 49, and serine 52. Threonine 54 is subject to Phosphothreonine. A Phosphoserine modification is found at serine 56. The helical transmembrane segment at 75–97 (MSVFNLSNAIMGSGILGLAFALA) threads the bilayer. Over 98 to 112 (NTGILLFLVLLTSVT) the chain is Extracellular. Residues 113–133 (LLSIYSINLLLICSKETGCMV) traverse the membrane as a helical segment. Residues 134–147 (YEKLGEQVFGTTGK) lie on the Cytoplasmic side of the membrane. The chain crosses the membrane as a helical span at residues 148 to 168 (FVIFGATSLQNTGAMLSYLFI). The Extracellular segment spans residues 169–188 (VKNELPSAIKFLMGKEETFS). Residues 189-211 (AWYVDGRVLVVIVTFGIILPLCL) traverse the membrane as a helical segment. Over 212 to 216 (LKNLG) the chain is Cytoplasmic. A helical transmembrane segment spans residues 217-237 (YLGYTSGFSLSCMVFFLIVVI). Over 238–275 (YKKFQIPCIVPELNSTISANSTNADTCTPKYVTFNSKT) the chain is Extracellular. Cysteine 245 and cysteine 264 form a disulfide bridge. Residues asparagine 251 and asparagine 257 are each glycosylated (N-linked (GlcNAc...) asparagine). The chain crosses the membrane as a helical span at residues 276–296 (VYALPTIAFAFVCHPSVLPIY). At 297–312 (SELKDRSQKKMQMVSN) the chain is on the cytoplasmic side. The chain crosses the membrane as a helical span at residues 313–333 (ISFFAMFVMYFLTAIFGYLTF). Topologically, residues 334-350 (YDNVQSDLLHKYQSKDD) are extracellular. The helical transmembrane segment at 351-371 (ILILTVRLAVIVAVILTVPVL) threads the bilayer. The Cytoplasmic segment spans residues 372 to 393 (FFTVRSSLFELAKKTKFNLCRH). Residues 394–414 (TVVTCILLVVINLLVIFIPSM) traverse the membrane as a helical segment. Residues 415-416 (KD) lie on the Extracellular side of the membrane. A helical transmembrane segment spans residues 417–437 (IFGVVGVTSANMLIFILPSSL). Residues 438 to 452 (YLKITDQDGDKGTQR) are Cytoplasmic-facing. A helical membrane pass occupies residues 453 to 473 (IWAALFLGLGVLFSLVSIPLV). Residues 474 to 487 (IYDWACSSSSDEGH) are Extracellular-facing.

Belongs to the amino acid/polyamine transporter 2 family. In terms of processing, N-glycosylation plays an important role in the L-glutamine transport. Expressed in the cerebral cortex by pyramidal and GABAergic neurons, astrocytes and other non-neuronal cells (at protein level). Expressed in placenta, heart, lung, skeletal muscle, spleen, stomach and testis. Highly expressed in cytotrophoblast cells from term placenta.

Its subcellular location is the cell membrane. The catalysed reaction is L-glutamine(in) + Na(+)(in) = L-glutamine(out) + Na(+)(out). The enzyme catalyses L-alanine(in) + Na(+)(in) = L-alanine(out) + Na(+)(out). It carries out the reaction L-asparagine(in) + Na(+)(in) = L-asparagine(out) + Na(+)(out). It catalyses the reaction L-histidine(in) + Na(+)(in) = L-histidine(out) + Na(+)(out). The catalysed reaction is L-serine(in) + Na(+)(in) = L-serine(out) + Na(+)(out). The enzyme catalyses L-cysteine(in) + Na(+)(in) = L-cysteine(out) + Na(+)(out). It carries out the reaction L-methionine(in) + Na(+)(in) = L-methionine(out) + Na(+)(out). It catalyses the reaction glycine(in) + Na(+)(in) = glycine(out) + Na(+)(out). The catalysed reaction is L-threonine(in) + Na(+)(in) = L-threonine(out) + Na(+)(out). The enzyme catalyses L-proline(in) + Na(+)(in) = L-proline(out) + Na(+)(out). With respect to regulation, inhibited by alpha-(methylamino)isobutyric acid (MeAIB). Inhibited by lithium, potassium, choline ions, N-methylglucamine. The pH dependence has an allosteric effect on the transport. Functionally, symporter that cotransports short-chain neutral amino acids and sodium ions from the extraccellular to the intracellular side of the cell membrane. The transport is elctrogenic, pH dependent and driven by the Na(+) electrochemical gradient. Participates in the astroglia-derived glutamine transport into GABAergic interneurons for neurotransmitter GABA de novo synthesis. May also contributes to amino acid transport in placental trophoblasts. Also regulates synaptic plasticity. The chain is Sodium-coupled neutral amino acid symporter 1 (SLC38A1) from Homo sapiens (Human).